Reading from the N-terminus, the 174-residue chain is 5-hydroxymethyl-dUMP N-hydrolase (174 aa).

Position 2 is an N-acetylalanine (Ala-2). Gly-27 is a 5-hydroxymethyl-dUMP binding site. At Ser-28 the chain carries Phosphoserine. 5-hydroxymethyl-dUMP is bound by residues Ile-29, Arg-30, Gly-31, Ser-98, Gly-100, and Glu-104. Ser-98 carries the phosphoserine modification. A phosphoserine mark is found at Ser-123, Ser-128, Ser-138, and Ser-169. Position 128 (Ser-128) interacts with 5-hydroxymethyl-dUMP.

It belongs to the 2'-deoxynucleoside 5'-phosphate N-hydrolase 1 family. As to quaternary structure, monomer and homodimer. In terms of tissue distribution, expressed at low levels in brain, colon, lung, peripheral blood leukocytes, placenta, small intestine, and thymus. Expressed at high levels in heart, kidney, liver, skeletal muscle and spleen. Overexpressed in a significant proportion of breast cancers.

The protein resides in the cytoplasm. It is found in the nucleus. It carries out the reaction 5-hydroxymethyl-dUMP + H2O = 5-hydroxymethyluracil + 2-deoxy-D-ribose 5-phosphate. Inhibited by AMP and GMP. Its function is as follows. Part of a nucleotide salvage pathway that eliminates epigenetically modified 5-hydroxymethyl-dCMP (hmdCMP) in a two-step process entailing deamination to cytotoxic 5-hydroxymethyl-dUMP (hmdUMP), followed by its hydrolysis into 5-hydroxymethyluracil (hmU) and 2-deoxy-D-ribose 5-phosphate (deoxyribosephosphate). Catalyzes the second step in that pathway, the hydrolysis of the N-glycosidic bond in hmdUMP, degrading this cytotoxic nucleotide to avoid its genomic integration. This is 5-hydroxymethyl-dUMP N-hydrolase from Homo sapiens (Human).